A 359-amino-acid chain; its full sequence is Phospho-N-acetylmuramoyl-pentapeptide-transferase (359 aa).

A run of 10 helical transmembrane segments spans residues Gln3 to Ile23, Val55 to Met75, Gly84 to Ile104, Thr117 to Phe137, Ile156 to Ala176, Leu190 to Phe210, Leu231 to Ala251, Ile255 to Thr275, Val283 to Phe303, and Val330 to Tyr350.

This sequence belongs to the glycosyltransferase 4 family. MraY subfamily. Mg(2+) serves as cofactor.

It is found in the cell membrane. It carries out the reaction UDP-N-acetyl-alpha-D-muramoyl-L-alanyl-gamma-D-glutamyl-meso-2,6-diaminopimeloyl-D-alanyl-D-alanine + di-trans,octa-cis-undecaprenyl phosphate = di-trans,octa-cis-undecaprenyl diphospho-N-acetyl-alpha-D-muramoyl-L-alanyl-D-glutamyl-meso-2,6-diaminopimeloyl-D-alanyl-D-alanine + UMP. It functions in the pathway cell wall biogenesis; peptidoglycan biosynthesis. Functionally, catalyzes the initial step of the lipid cycle reactions in the biosynthesis of the cell wall peptidoglycan: transfers peptidoglycan precursor phospho-MurNAc-pentapeptide from UDP-MurNAc-pentapeptide onto the lipid carrier undecaprenyl phosphate, yielding undecaprenyl-pyrophosphoryl-MurNAc-pentapeptide, known as lipid I. In Mycolicibacterium gilvum (strain PYR-GCK) (Mycobacterium gilvum (strain PYR-GCK)), this protein is Phospho-N-acetylmuramoyl-pentapeptide-transferase.